Here is a 766-residue protein sequence, read N- to C-terminus: Phospholipid phosphatase-related protein type 4 (766 aa).

A Phosphoserine modification is found at serine 37. A run of 4 helical transmembrane segments spans residues 68-88 (LPCFYFVELPILASSVVSLYF), 120-140 (AIPFLMLLSLAFAGPAITIMV), 179-199 (FVGVHVVGLCSTALITDIIQL), and 248-268 (SFPSQHATLAAFAAVYVSMYF). A glycan (N-linked (GlcNAc...) asparagine) is linked at asparagine 269. Transmembrane regions (helical) follow at residues 277–297 (KLLKPLLVFTFIICGIICGLT) and 309–329 (VYCGFLIGGGIALYLGLYAVG). Serine 347 carries the phosphoserine modification. The N-linked (GlcNAc...) asparagine glycan is linked to asparagine 363. Serine 386 carries the phosphoserine modification. Asparagine 433 carries N-linked (GlcNAc...) asparagine glycosylation. Residue serine 439 is modified to Phosphoserine. Disordered stretches follow at residues 454–503 (SKNE…GNQY) and 510–529 (TVPGCNNSMPAGPRVSIQSR). Asparagine 456 is a glycosylation site (N-linked (GlcNAc...) asparagine). Residues serine 462 and serine 474 each carry the phosphoserine modification. N-linked (GlcNAc...) asparagine glycans are attached at residues asparagine 515 and asparagine 545. The residue at position 608 (serine 608) is a Phosphoserine. 3 disordered regions span residues 634 to 654 (PIIQIPSSTEGEGSGSWKWKA), 672 to 705 (DSESCESLKDSFGSGDRKRKHIDSNEHHHHGITT), and 741 to 766 (PERSNSPENTRNIFYKGTSPTRPYKD). Residues 688–702 (RKRKHIDSNEHHHHG) show a composition bias toward basic residues. Over residues 743-752 (RSNSPENTRN) the composition is skewed to polar residues.

Belongs to the PA-phosphatase related phosphoesterase family. Post-translationally, O-glycosylated. Probably at Ser-347. Specifically expressed in neurons (at protein level).

Its subcellular location is the postsynaptic density membrane. Postsynaptic density membrane protein that indirectly regulates glutamatergic synaptic transmission through lysophosphatidic acid (LPA)-mediated signaling pathways. Binds lysophosphatidic acid (LPA) and mediates its internalization into cells. Could act as receptor or a transporter of this lipid at the post-synaptic membrane. Modulates lysophosphatidic acid (LPA) activity in neuron axonal outgrowth during development by attenuating phospholipid-induced axon collapse. The polypeptide is Phospholipid phosphatase-related protein type 4 (Rattus norvegicus (Rat)).